We begin with the raw amino-acid sequence, 472 residues long: Uronate isomerase (472 aa).

It belongs to the metallo-dependent hydrolases superfamily. Uronate isomerase family.

It carries out the reaction D-glucuronate = D-fructuronate. It catalyses the reaction aldehydo-D-galacturonate = keto-D-tagaturonate. Its pathway is carbohydrate metabolism; pentose and glucuronate interconversion. The chain is Uronate isomerase from Oceanobacillus iheyensis (strain DSM 14371 / CIP 107618 / JCM 11309 / KCTC 3954 / HTE831).